A 329-amino-acid polypeptide reads, in one-letter code: Malate dehydrogenase (329 aa).

12-18 (GAAGQIG) contacts NAD(+). Residues arginine 93 and arginine 99 each coordinate substrate. NAD(+)-binding positions include asparagine 106, glutamine 113, and 130 to 132 (VGN). Residues asparagine 132 and arginine 163 each coordinate substrate. Histidine 188 serves as the catalytic Proton acceptor.

It belongs to the LDH/MDH superfamily. MDH type 2 family.

The enzyme catalyses (S)-malate + NAD(+) = oxaloacetate + NADH + H(+). Catalyzes the reversible oxidation of malate to oxaloacetate. This chain is Malate dehydrogenase, found in Frankia casuarinae (strain DSM 45818 / CECT 9043 / HFP020203 / CcI3).